A 93-amino-acid chain; its full sequence is Small ribosomal subunit protein uS19 (93 aa).

Belongs to the universal ribosomal protein uS19 family.

Functionally, protein S19 forms a complex with S13 that binds strongly to the 16S ribosomal RNA. The chain is Small ribosomal subunit protein uS19 from Geotalea daltonii (strain DSM 22248 / JCM 15807 / FRC-32) (Geobacter daltonii).